A 252-amino-acid chain; its full sequence is tRNA-cytidine(32) 2-sulfurtransferase (252 aa).

The short motif at 37-42 (SGGKDS) is the PP-loop motif element. 3 residues coordinate [4Fe-4S] cluster: C112, C115, and C202.

Belongs to the TtcA family. Homodimer. Mg(2+) serves as cofactor. Requires [4Fe-4S] cluster as cofactor.

The protein resides in the cytoplasm. The enzyme catalyses cytidine(32) in tRNA + S-sulfanyl-L-cysteinyl-[cysteine desulfurase] + AH2 + ATP = 2-thiocytidine(32) in tRNA + L-cysteinyl-[cysteine desulfurase] + A + AMP + diphosphate + H(+). It participates in tRNA modification. In terms of biological role, catalyzes the ATP-dependent 2-thiolation of cytidine in position 32 of tRNA, to form 2-thiocytidine (s(2)C32). The sulfur atoms are provided by the cysteine/cysteine desulfurase (IscS) system. The chain is tRNA-cytidine(32) 2-sulfurtransferase from Geotalea daltonii (strain DSM 22248 / JCM 15807 / FRC-32) (Geobacter daltonii).